A 503-amino-acid polypeptide reads, in one-letter code: Maturase K (503 aa).

Belongs to the intron maturase 2 family. MatK subfamily.

The protein resides in the plastid. Its subcellular location is the chloroplast. In terms of biological role, usually encoded in the trnK tRNA gene intron. Probably assists in splicing its own and other chloroplast group II introns. The protein is Maturase K of Vicia villosa (Hairy vetch).